We begin with the raw amino-acid sequence, 355 residues long: GTPase Obg (355 aa).

In terms of domain architecture, Obg spans 1–159 (MKLVDEAEIL…RLLKLELKLL (159 aa)). The OBG-type G domain occupies 160–342 (ADVGLLGFPN…IMKDVMAFFD (183 aa)). GTP contacts are provided by residues 166–173 (GFPNAGKS), 191–195 (FTTLY), 213–216 (DVPG), 292–295 (NKAD), and 323–325 (SAL). The Mg(2+) site is built by Ser-173 and Thr-193.

It belongs to the TRAFAC class OBG-HflX-like GTPase superfamily. OBG GTPase family. As to quaternary structure, monomer. Requires Mg(2+) as cofactor.

The protein resides in the cytoplasm. Its function is as follows. An essential GTPase which binds GTP, GDP and possibly (p)ppGpp with moderate affinity, with high nucleotide exchange rates and a fairly low GTP hydrolysis rate. Plays a role in control of the cell cycle, stress response, ribosome biogenesis and in those bacteria that undergo differentiation, in morphogenesis control. This Xanthomonas euvesicatoria pv. vesicatoria (strain 85-10) (Xanthomonas campestris pv. vesicatoria) protein is GTPase Obg.